Here is a 126-residue protein sequence, read N- to C-terminus: H2B.U histone 2 (126 aa).

Positions 1 to 35 (MPEPSRSTPAPKKGSKKAITKAQKKDGKKRKRGRK) are disordered. Pro2 carries the post-translational modification N-acetylproline. Glu3 carries the post-translational modification ADP-ribosyl glutamic acid. An ADP-ribosylserine modification is found at Ser7. Lys12 carries the post-translational modification N6-(beta-hydroxybutyryl)lysine; alternate. N6-acetyllysine; alternate is present on residues Lys12 and Lys13. 2 positions are modified to N6-crotonyllysine; alternate: Lys12 and Lys13. Lys12 bears the N6-lactoyllysine; alternate mark. Lys13 is subject to N6-(2-hydroxyisobutyryl)lysine; alternate. Ser15 carries the post-translational modification Phosphoserine; by STK4/MST1. Residues Lys16, Lys17, Lys21, and Lys24 each carry the N6-acetyllysine; alternate modification. 4 positions are modified to N6-crotonyllysine; alternate: Lys16, Lys17, Lys21, and Lys24. Residues Lys16, Lys17, Lys21, and Lys24 each carry the N6-lactoyllysine; alternate modification. An N6-glutaryllysine; alternate modification is found at Lys17. The residue at position 21 (Lys21) is an N6-(beta-hydroxybutyryl)lysine; alternate. An N6-(2-hydroxyisobutyryl)lysine; alternate mark is found at Lys21 and Lys24. Lys21 carries the post-translational modification N6-butyryllysine; alternate. Lys21 is covalently cross-linked (Glycyl lysine isopeptide (Lys-Gly) (interchain with G-Cter in SUMO2); alternate). N6-(2-hydroxyisobutyryl)lysine is present on Lys25. Residue Lys35 is modified to N6-(beta-hydroxybutyryl)lysine; alternate. At Lys35 the chain carries N6-crotonyllysine; alternate. Residue Lys35 is modified to N6-(2-hydroxyisobutyryl)lysine; alternate. Lys35 carries the post-translational modification N6-glutaryllysine; alternate. Lys35 bears the N6-succinyllysine; alternate mark. Residue Lys35 forms a Glycyl lysine isopeptide (Lys-Gly) (interchain with G-Cter in ubiquitin); alternate linkage. PolyADP-ribosyl glutamic acid is present on Glu36. Ser37 carries the phosphoserine; by AMPK modification. Lys44 carries the post-translational modification N6-lactoyllysine; alternate. Residues Lys44, Lys47, and Lys58 each carry the N6-(2-hydroxyisobutyryl)lysine; alternate modification. 2 positions are modified to N6-glutaryllysine; alternate: Lys44 and Lys47. Lys47 bears the N6-methyllysine; alternate mark. An N6,N6-dimethyllysine; alternate modification is found at Lys58. The residue at position 80 (Arg80) is a Dimethylated arginine. Residue Lys86 is modified to N6-acetyllysine; alternate. Position 86 is an N6-lactoyllysine; alternate (Lys86). Lys86 is modified (N6-(2-hydroxyisobutyryl)lysine; alternate). Lys86 bears the N6,N6,N6-trimethyllysine; alternate mark. Residues Arg87 and Arg93 each carry the omega-N-methylarginine modification. An N6-(beta-hydroxybutyryl)lysine; alternate modification is found at Lys109. N6-lactoyllysine; alternate is present on Lys109. Lys109 bears the N6-(2-hydroxyisobutyryl)lysine; alternate mark. Lys109 carries the N6-glutaryllysine; alternate modification. Lys109 bears the N6-methyllysine; alternate mark. An O-linked (GlcNAc) serine glycan is attached at Ser113. Thr116 carries the phosphothreonine modification. Lys117 carries the post-translational modification N6-(beta-hydroxybutyryl)lysine; alternate. 2 positions are modified to N6-lactoyllysine; alternate: Lys117 and Lys121. Residues Lys117 and Lys121 each carry the N6-(2-hydroxyisobutyryl)lysine; alternate modification. 2 positions are modified to N6-glutaryllysine; alternate: Lys117 and Lys121. 2 positions are modified to N6-succinyllysine; alternate: Lys117 and Lys121. Residue Lys117 is modified to N6-methylated lysine; alternate. Residue Lys121 forms a Glycyl lysine isopeptide (Lys-Gly) (interchain with G-Cter in ubiquitin); alternate linkage.

This sequence belongs to the histone H2B family. In terms of assembly, the nucleosome is a histone octamer containing two molecules each of H2A, H2B, H3 and H4 assembled in one H3-H4 heterotetramer and two H2A-H2B heterodimers. The octamer wraps approximately 147 bp of DNA. Post-translationally, monoubiquitination at Lys-35 (H2BK34Ub) by the MSL1/MSL2 dimer is required for histone H3 'Lys-4' (H3K4me) and 'Lys-79' (H3K79me) methylation and transcription activation at specific gene loci, such as HOXA9 and MEIS1 loci. Similarly, monoubiquitination at Lys-121 (H2BK120Ub) by the RNF20/40 complex gives a specific tag for epigenetic transcriptional activation and is also prerequisite for histone H3 'Lys-4' and 'Lys-79' methylation. It also functions cooperatively with the FACT dimer to stimulate elongation by RNA polymerase II. H2BK120Ub also acts as a regulator of mRNA splicing: deubiquitination by USP49 is required for efficient cotranscriptional splicing of a large set of exons. In terms of processing, phosphorylated on Ser-15 (H2BS14ph) by STK4/MST1 during apoptosis; which facilitates apoptotic chromatin condensation. Also phosphorylated on Ser-15 in response to DNA double strand breaks (DSBs), and in correlation with somatic hypermutation and immunoglobulin class-switch recombination. Phosphorylation at Ser-37 (H2BS36ph) by AMPK in response to stress promotes transcription. GlcNAcylation at Ser-113 promotes monoubiquitination of Lys-121. It fluctuates in response to extracellular glucose, and associates with transcribed genes. Post-translationally, ADP-ribosylated by PARP1 or PARP2 on Ser-7 (H2BS6ADPr) in response to DNA damage. H2BS6ADPr promotes recruitment of CHD1L. Mono-ADP-ribosylated on Glu-3 (H2BE2ADPr) by PARP3 in response to single-strand breaks. Poly ADP-ribosylation on Glu-36 (H2BE35ADPr) by PARP1 regulates adipogenesis: it inhibits phosphorylation at Ser-37 (H2BS36ph), thereby blocking expression of pro-adipogenetic genes. In terms of processing, crotonylation (Kcr) is specifically present in male germ cells and marks testis-specific genes in post-meiotic cells, including X-linked genes that escape sex chromosome inactivation in haploid cells. Crotonylation marks active promoters and enhancers and confers resistance to transcriptional repressors. It is also associated with post-meiotically activated genes on autosomes. Hydroxybutyrylation of histones is induced by starvation. Post-translationally, lactylated in macrophages by EP300/P300 by using lactoyl-CoA directly derived from endogenous or exogenous lactate, leading to stimulates gene transcription.

It is found in the nucleus. It localises to the chromosome. Its function is as follows. Core component of nucleosome. Nucleosomes wrap and compact DNA into chromatin, limiting DNA accessibility to the cellular machineries which require DNA as a template. Histones thereby play a central role in transcription regulation, DNA repair, DNA replication and chromosomal stability. DNA accessibility is regulated via a complex set of post-translational modifications of histones, also called histone code, and nucleosome remodeling. The polypeptide is H2B.U histone 2 (Mus musculus (Mouse)).